We begin with the raw amino-acid sequence, 140 residues long: MSKRGRGGSAGNKFRMSLGLPVAATINCADNTGAKNLYIISVKGIKGRLNRLPSACVGDMVMATVKKGKPDLRKKVMPAVVVRQRKPWRRKDGVFMYFEDNAGVIVNAKGEMKGSAITGPIGKECADLWPRIASAANAIV.

It belongs to the universal ribosomal protein uL14 family.

The protein is Large ribosomal subunit protein uL14 (RPL23) of Nicotiana tabacum (Common tobacco).